We begin with the raw amino-acid sequence, 150 residues long: Small ribosomal subunit protein uS13 (150 aa).

The disordered stretch occupies residues 131–150 (QRTKSTFRRGPTVGVSRRKK).

This sequence belongs to the universal ribosomal protein uS13 family. Part of the 30S ribosomal subunit. Forms a loose heterodimer with protein S19. Forms two bridges to the 50S subunit in the 70S ribosome.

Its function is as follows. Located at the top of the head of the 30S subunit, it contacts several helices of the 16S rRNA. In the 70S ribosome it contacts the 23S rRNA (bridge B1a) and protein L5 of the 50S subunit (bridge B1b), connecting the 2 subunits; these bridges are implicated in subunit movement. The protein is Small ribosomal subunit protein uS13 of Methanocaldococcus jannaschii (strain ATCC 43067 / DSM 2661 / JAL-1 / JCM 10045 / NBRC 100440) (Methanococcus jannaschii).